A 341-amino-acid polypeptide reads, in one-letter code: Uroporphyrinogen decarboxylase (341 aa).

Substrate-binding positions include 23 to 27 (RQAGR), Asp73, Tyr148, Ser203, and His318.

The protein belongs to the uroporphyrinogen decarboxylase family. In terms of assembly, homodimer.

It localises to the cytoplasm. It catalyses the reaction uroporphyrinogen III + 4 H(+) = coproporphyrinogen III + 4 CO2. It functions in the pathway porphyrin-containing compound metabolism; protoporphyrin-IX biosynthesis; coproporphyrinogen-III from 5-aminolevulinate: step 4/4. Catalyzes the decarboxylation of four acetate groups of uroporphyrinogen-III to yield coproporphyrinogen-III. In Brucella ovis (strain ATCC 25840 / 63/290 / NCTC 10512), this protein is Uroporphyrinogen decarboxylase.